Consider the following 544-residue polypeptide: Probable protein kinase UbiB (544 aa).

The Protein kinase domain occupies 123–501 (DFDLVPLASA…KRQQATGKFL (379 aa)). ATP-binding positions include 129–137 (LASASIAQV) and Lys152. Asp287 (proton acceptor) is an active-site residue. 2 consecutive transmembrane segments (helical) span residues 496–516 (ATGKFLFGVGATLVVCSAILV) and 519–539 (TYEQLSLATAIAGVTFWLFSW).

Belongs to the ABC1 family. UbiB subfamily.

Its subcellular location is the cell inner membrane. Its pathway is cofactor biosynthesis; ubiquinone biosynthesis [regulation]. Is probably a protein kinase regulator of UbiI activity which is involved in aerobic coenzyme Q (ubiquinone) biosynthesis. The protein is Probable protein kinase UbiB of Vibrio vulnificus (strain YJ016).